A 634-amino-acid chain; its full sequence is Kelch-like protein 31 (634 aa).

A2 carries the n,N,N-trimethylalanine modification. Residues 73–137 (CDLVIGTKTK…AYTGKLTLSL (65 aa)) form the BTB domain. Residues 172 to 273 (CMYVVNIAET…SAQDLVNYVQ (102 aa)) form the BACK domain. 6 Kelch repeats span residues 317-365 (VLVT…VMDG), 366-419 (FLYV…VFNG), 420-466 (LVYA…VADG), 468-513 (VLVT…TLSD), 515-565 (VYVM…ALHG), and 567-614 (AYLV…TLSM).

Post-translationally, N-terminus is methylated by METTL11A/NTM1. Strongly expressed in skeletal muscle and weakly in heart. According to PubMed:15302408, not expressed in other tissues. According to PubMed:18719355, abundantly expressed in both embryonic skeletal and heart tissues.

In terms of biological role, transcriptional repressor in MAPK/JNK signaling pathway to regulate cellular functions. Overexpression inhibits the transcriptional activities of both the TPA-response element (TRE) and serum response element (SRE). The chain is Kelch-like protein 31 (KLHL31) from Homo sapiens (Human).